The primary structure comprises 329 residues: N-acetyl-gamma-glutamyl-phosphate reductase (329 aa).

C155 is an active-site residue.

It belongs to the NAGSA dehydrogenase family. Type 1 subfamily.

The protein localises to the cytoplasm. It catalyses the reaction N-acetyl-L-glutamate 5-semialdehyde + phosphate + NADP(+) = N-acetyl-L-glutamyl 5-phosphate + NADPH + H(+). The protein operates within amino-acid biosynthesis; L-arginine biosynthesis; N(2)-acetyl-L-ornithine from L-glutamate: step 3/4. Catalyzes the NADPH-dependent reduction of N-acetyl-5-glutamyl phosphate to yield N-acetyl-L-glutamate 5-semialdehyde. This chain is N-acetyl-gamma-glutamyl-phosphate reductase, found in Shewanella piezotolerans (strain WP3 / JCM 13877).